The primary structure comprises 281 residues: MNIVNTIKDVRLIIKKWKDENLSIGYVPTMGYLHEGHASLIKKAREENDKVIVSIFVNPIQFGPKEDYSTYPRDLVKDSSLCEKFGVDLIFNPETSEMYPNKIYSHINVDILTENLCGEKRPGHFQGVCTVLTKFFNILNPTKAYFGEKDAQQLAVVRKMVEDLNFPIEIIGCPIIREDDGLAKSSRNAYLNKQERKSALILNKSLKEALNALESEEKNSNNIKDIIVSKLNKEPLAKIDYVSIVDSITLQSVEKIQSPILVAIAVYIGKTRLIDNFTFKL.

An ATP-binding site is contributed by 30–37; that stretch reads MGYLHEGH. The active-site Proton donor is H37. Q61 is a (R)-pantoate binding site. Position 61 (Q61) interacts with beta-alanine. 147-150 contributes to the ATP binding site; sequence GEKD. Q153 contacts (R)-pantoate. ATP-binding positions include I176 and 184–187; that span reads KSSR.

Belongs to the pantothenate synthetase family. Homodimer.

The protein resides in the cytoplasm. The catalysed reaction is (R)-pantoate + beta-alanine + ATP = (R)-pantothenate + AMP + diphosphate + H(+). It participates in cofactor biosynthesis; (R)-pantothenate biosynthesis; (R)-pantothenate from (R)-pantoate and beta-alanine: step 1/1. Catalyzes the condensation of pantoate with beta-alanine in an ATP-dependent reaction via a pantoyl-adenylate intermediate. This is Pantothenate synthetase from Clostridium botulinum (strain Kyoto / Type A2).